Consider the following 314-residue polypeptide: Oxidoreductase NAD-binding domain-containing protein 1 (314 aa).

A signal peptide spans methionine 1–glycine 18. An FAD-binding FR-type domain is found at glutamate 63–glutamine 166. Glycine 180 to proline 185 contacts NAD(+).

This chain is Oxidoreductase NAD-binding domain-containing protein 1 (oxnad1), found in Xenopus tropicalis (Western clawed frog).